The sequence spans 414 residues: Esterase FrsA (414 aa).

Belongs to the FrsA family.

It carries out the reaction a carboxylic ester + H2O = an alcohol + a carboxylate + H(+). Its function is as follows. Catalyzes the hydrolysis of esters. In Escherichia coli O139:H28 (strain E24377A / ETEC), this protein is Esterase FrsA.